We begin with the raw amino-acid sequence, 146 residues long: D-aminoacyl-tRNA deacylase (146 aa).

The Gly-cisPro motif, important for rejection of L-amino acids motif lies at glycine 137 to proline 138.

It belongs to the DTD family. As to quaternary structure, homodimer.

It is found in the cytoplasm. It carries out the reaction glycyl-tRNA(Ala) + H2O = tRNA(Ala) + glycine + H(+). The enzyme catalyses a D-aminoacyl-tRNA + H2O = a tRNA + a D-alpha-amino acid + H(+). Its function is as follows. An aminoacyl-tRNA editing enzyme that deacylates mischarged D-aminoacyl-tRNAs. Also deacylates mischarged glycyl-tRNA(Ala), protecting cells against glycine mischarging by AlaRS. Acts via tRNA-based rather than protein-based catalysis; rejects L-amino acids rather than detecting D-amino acids in the active site. By recycling D-aminoacyl-tRNA to D-amino acids and free tRNA molecules, this enzyme counteracts the toxicity associated with the formation of D-aminoacyl-tRNA entities in vivo and helps enforce protein L-homochirality. This is D-aminoacyl-tRNA deacylase from Halalkalibacterium halodurans (strain ATCC BAA-125 / DSM 18197 / FERM 7344 / JCM 9153 / C-125) (Bacillus halodurans).